The primary structure comprises 88 residues: Small ribosomal subunit protein uS19 (88 aa).

Belongs to the universal ribosomal protein uS19 family.

Functionally, protein S19 forms a complex with S13 that binds strongly to the 16S ribosomal RNA. The chain is Small ribosomal subunit protein uS19 (rpsS) from Chlamydia muridarum (strain MoPn / Nigg).